Here is a 342-residue protein sequence, read N- to C-terminus: Replication factor C subunit 3 (342 aa).

63–70 contacts ATP; that stretch reads GPPGTGKT.

The protein belongs to the activator 1 small subunits family. As to quaternary structure, heteropentamer of subunits rfc1, rfc2, rfc3, rfc4 and rfc5 that forms a complex (RFC) with PCNA in the presence of ATP. Two other complexes exist where rfc1 can be replaced by either ctf18 or elg1 to form the ctf18-RFC or the elg1-RFC complexes respectively.

Its subcellular location is the nucleus. In terms of biological role, the elongation of primed DNA templates by DNA polymerase delta and epsilon requires the action of the accessory proteins PCNA and activator 1. Subunit 3 binds ATP. Also involved in replication and DNA damage checkpoint controls, probably functioning as a checkpoint sensor. This is Replication factor C subunit 3 (rfc3) from Schizosaccharomyces pombe (strain 972 / ATCC 24843) (Fission yeast).